We begin with the raw amino-acid sequence, 65 residues long: Conotoxin Cal1.5 (65 aa).

Residues 1–18 (MRCLPVFIILLLLASTAA) form the signal peptide. Residues 19–49 (VDVAGSKLKRRLERKPYQGSQAYVKKTAFGL) constitute a propeptide that is removed on maturation. 2 disulfides stabilise this stretch: Cys-52–Cys-62 and Cys-53–Cys-59. 4-hydroxyproline is present on Pro-61.

It belongs to the conotoxin T superfamily. Expressed by the venom duct.

Its subcellular location is the secreted. In terms of biological role, probable neurotoxin with unknown target. Possibly targets ion channels. This chain is Conotoxin Cal1.5, found in Californiconus californicus (California cone).